Here is a 356-residue protein sequence, read N- to C-terminus: Biotin synthase (356 aa).

The segment at 1 to 28 (MTIQANVPTGDETSDEASRQTSNEASSE) is disordered. One can recognise a Radical SAM core domain in the interval 77 to 302 (EDVEVEGIIS…RTVLRYAGGR (226 aa)). The [4Fe-4S] cluster site is built by Cys92, Cys96, and Cys99. Positions 135, 168, 227, and 297 each coordinate [2Fe-2S] cluster.

The protein belongs to the radical SAM superfamily. Biotin synthase family. Homodimer. The cofactor is [4Fe-4S] cluster. It depends on [2Fe-2S] cluster as a cofactor.

The catalysed reaction is (4R,5S)-dethiobiotin + (sulfur carrier)-SH + 2 reduced [2Fe-2S]-[ferredoxin] + 2 S-adenosyl-L-methionine = (sulfur carrier)-H + biotin + 2 5'-deoxyadenosine + 2 L-methionine + 2 oxidized [2Fe-2S]-[ferredoxin]. Its pathway is cofactor biosynthesis; biotin biosynthesis; biotin from 7,8-diaminononanoate: step 2/2. Its function is as follows. Catalyzes the conversion of dethiobiotin (DTB) to biotin by the insertion of a sulfur atom into dethiobiotin via a radical-based mechanism. This is Biotin synthase from Arthrobacter sp. (strain FB24).